The primary structure comprises 183 residues: Maltose O-acetyltransferase (183 aa).

N83 provides a ligand contact to acetyl-CoA. Catalysis depends on H113, which acts as the Proton donor/acceptor. Acetyl-CoA contacts are provided by residues G140, S158, 163-164 (TK), R178, and K181.

The protein belongs to the transferase hexapeptide repeat family. Homodimer.

It catalyses the reaction D-maltose + acetyl-CoA = 1-O-acetylmaltose + CoA. Catalyzes the CoA-dependent transfer of an acetyl group to maltose and other sugars. Acetylates glucose exclusively at the C6 position and maltose at the C6 position of the non-reducing end glucosyl moiety. Is able to acetylate maltooligosaccharides. The chain is Maltose O-acetyltransferase (maa) from Escherichia coli (strain K12).